A 499-amino-acid polypeptide reads, in one-letter code: Circadian clock oscillator protein KaiC (499 aa).

KaiC domains lie at 1–243 and 257–499; these read MQSS…VSVF and VRIS…DERA. The ATP site is built by Gly45, Thr46, Gly47, Lys48, Thr49, Ser85, Lys220, Leu221, Arg222, Thr224, His226, Thr286, Gly287, Thr288, Gly289, Lys290, Thr291, and Leu292. Position 49 (Thr49) interacts with Mg(2+). Thr291 provides a ligand contact to Mg(2+). Glu314 lines the Mg(2+) pocket. Trp327 provides a ligand contact to ATP. Ser427 carries the phosphoserine; by autocatalysis modification. Residue Thr428 is modified to Phosphothreonine; by autocatalysis. ATP-binding residues include Arg447, Lys453, Met454, Arg455, Ser457, His459, and Lys461.

This sequence belongs to the KaiC family. In terms of assembly, homohexamer; hexamerization is dependent on ATP-binding. Component of the KaiBC complex. KaiC interacts with SasA, activating its autokinase function and leading to RpaA activation. Mg(2+) is required as a cofactor. Post-translationally, phosphorylated on serine and threonine residues by autocatalysis. Has a 4 step phosphorylation cycle; the autokinase acts first on Thr-428, then Ser-427. When Ser-427 is modified KaiC switches to an autophosphatase mode, acting first on phospho-Thr-428 then phospho-Ser-427.

It carries out the reaction L-seryl-[protein] + ATP = O-phospho-L-seryl-[protein] + ADP + H(+). The catalysed reaction is L-threonyl-[protein] + ATP = O-phospho-L-threonyl-[protein] + ADP + H(+). It catalyses the reaction ATP + H2O = ADP + phosphate + H(+). In terms of biological role, central component of the KaiBC oscillator complex, which constitutes the main circadian regulator in cyanobacteria. Its composition changes during the circadian cycle to control KaiC phosphorylation. Autophosphorylates and has a weak ATPase activity; ATPase activity defines the circadian period. This Prochlorococcus marinus (strain MIT 9313) protein is Circadian clock oscillator protein KaiC.